A 122-amino-acid polypeptide reads, in one-letter code: MANHEQIIEAIKEMSVLELNDLVKAIEEEFGVTAAAPVAVAGAAGGADAAAEKTEFDVELTSAGSSKIKVVKAVKEATGLGLKDAKELVDGAPKVIKEALPKEEAEKLKEQLEEVGATVELK.

Belongs to the bacterial ribosomal protein bL12 family. As to quaternary structure, homodimer. Part of the ribosomal stalk of the 50S ribosomal subunit. Forms a multimeric L10(L12)X complex, where L10 forms an elongated spine to which 2 to 4 L12 dimers bind in a sequential fashion. Binds GTP-bound translation factors.

Functionally, forms part of the ribosomal stalk which helps the ribosome interact with GTP-bound translation factors. Is thus essential for accurate translation. The chain is Large ribosomal subunit protein bL12 from Staphylococcus aureus (strain Mu50 / ATCC 700699).